We begin with the raw amino-acid sequence, 150 residues long: MEKRKDTKTTIAKASDAQNKSWYVIDATGKTLGRLSSEVAKILRGKHKVTYTPHIAMGDGVIVINAEKVHLTGAKKGQKIYRYYTGYISGMREIPFENMLAKKPSYIIEHAIKGMMPKTRLGKRQLKSLRILKGDCYKTFEAQKPILLDV.

Belongs to the universal ribosomal protein uL13 family. In terms of assembly, part of the 50S ribosomal subunit.

Functionally, this protein is one of the early assembly proteins of the 50S ribosomal subunit, although it is not seen to bind rRNA by itself. It is important during the early stages of 50S assembly. The protein is Large ribosomal subunit protein uL13 of Chlamydia caviae (strain ATCC VR-813 / DSM 19441 / 03DC25 / GPIC) (Chlamydophila caviae).